Here is a 154-residue protein sequence, read N- to C-terminus: MTDLIDATDRRILHELCANARIPVTELARKVGLSKTPVAARIRAMEEMGLITGYRAMLSPIRLGLIHVTYVEVRLNDTRQKALEQFNAAVREIPEVEECYMIAGGFDYLLKVRSHDIAEYRKIMGEKLSALPHVAATSSYVAMEAVVEQNSPSL.

The 62-residue stretch at 5–66 (IDATDRRILH…MLSPIRLGLI (62 aa)) folds into the HTH asnC-type domain. A DNA-binding region (H-T-H motif) is located at residues 24-43 (VTELARKVGLSKTPVAARIR).

Transcriptional activator of the putA gene in response to proline. This chain is Proline dehydrogenase transcriptional activator (putR), found in Rhodobacter capsulatus (Rhodopseudomonas capsulata).